The chain runs to 493 residues: Cholesteryl ester transfer protein (493 aa).

The first 17 residues, 1-17, serve as a signal peptide directing secretion; that stretch reads MLAATVLTLALLGNAHA. Asn105 is a glycosylation site (N-linked (GlcNAc...) (complex) asparagine). A disulfide bridge connects residues Cys160 and Cys201. N-linked (GlcNAc...) asparagine glycosylation is found at Asn257, Asn358, and Asn413.

The protein belongs to the BPI/LBP/Plunc superfamily. BPI/LBP family. In terms of tissue distribution, expressed by the liver and secreted in plasma.

The protein resides in the secreted. The enzyme catalyses cholesteryl (9Z-octadecenoate)(in) = cholesteryl (9Z-octadecenoate)(out). It catalyses the reaction 1,2,3-tri-(9Z-octadecenoyl)-glycerol(in) = 1,2,3-tri-(9Z-octadecenoyl)-glycerol(out). It carries out the reaction cholesteryl (9Z,12Z)-octadecadienoate(in) = cholesteryl (9Z,12Z)-octadecadienoate(out). In terms of biological role, involved in the transfer of neutral lipids, including cholesteryl ester and triglyceride, among lipoprotein particles. Allows the net movement of cholesteryl ester from high density lipoproteins/HDL to triglyceride-rich very low density lipoproteins/VLDL, and the equimolar transport of triglyceride from VLDL to HDL. Regulates the reverse cholesterol transport, by which excess cholesterol is removed from peripheral tissues and returned to the liver for elimination. In Homo sapiens (Human), this protein is Cholesteryl ester transfer protein.